The primary structure comprises 379 residues: Caffeyl-CoA reductase-Etf complex subunit CarC (379 aa).

FAD contacts are provided by residues 122–131 (FALTEPGAGS) and 155–157 (FIT). Ser-131 lines the substrate pocket. Substrate is bound at residue 239-242 (DVGR). FAD-binding positions include Arg-267, Gln-278, and 335–339 (QIHGG). The Proton acceptor role is filled by Glu-362. Gly-363 provides a ligand contact to substrate. 364-366 (TSQ) is an FAD binding site.

Belongs to the acyl-CoA dehydrogenase family. In terms of assembly, part of the homotrimeric caffeyl-CoA reductase-Etf complex composed of (R)-2-hydroxyisocaproyl-CoA dehydratase CarC, and the electron transfer flavoprotein (ETF) alpha (CarE) and beta (CarD) subunits. FAD serves as cofactor.

It localises to the cytoplasm. It catalyses the reaction hydrocaffeoyl-CoA + 2 reduced [2Fe-2S]-[ferredoxin] + 2 NAD(+) = (E)-caffeoyl-CoA + 2 oxidized [2Fe-2S]-[ferredoxin] + 2 NADH. The Caffeyl-CoA reductase-Etf complex catalyzes the reduction of caffeyl-CoA to yield hydrocaffeyl-CoA. It couples the endergonic ferredoxin reduction with NADH as reductant to the exergonic reduction of caffeoyl-CoA with the same reductant. It uses the mechanism of electron bifurcation to overcome the steep energy barrier in ferredoxin reduction. Also reduces 4-coumaroyl-CoA and feruloyl-CoA. This is Caffeyl-CoA reductase-Etf complex subunit CarC from Acetobacterium woodii (strain ATCC 29683 / DSM 1030 / JCM 2381 / KCTC 1655 / WB1).